The primary structure comprises 82 residues: Small ribosomal subunit protein bS16 (82 aa).

This sequence belongs to the bacterial ribosomal protein bS16 family.

The protein is Small ribosomal subunit protein bS16 of Actinobacillus pleuropneumoniae serotype 5b (strain L20).